A 213-amino-acid chain; its full sequence is Pyridoxine/pyridoxamine 5'-phosphate oxidase 2 (213 aa).

Residues 9–12 (RQRY) and Lys67 each bind substrate. FMN-binding positions include 62–67 (RTVLLK), 77–78 (FT), Lys84, and Gln106. Residues Tyr124, Arg128, and Ser132 each contribute to the substrate site. FMN contacts are provided by residues 141-142 (QS) and Trp186. 192-194 (RLH) provides a ligand contact to substrate. Arg196 provides a ligand contact to FMN.

The protein belongs to the pyridoxamine 5'-phosphate oxidase family. As to quaternary structure, homodimer. FMN is required as a cofactor.

It carries out the reaction pyridoxamine 5'-phosphate + O2 + H2O = pyridoxal 5'-phosphate + H2O2 + NH4(+). It catalyses the reaction pyridoxine 5'-phosphate + O2 = pyridoxal 5'-phosphate + H2O2. It participates in cofactor metabolism; pyridoxal 5'-phosphate salvage; pyridoxal 5'-phosphate from pyridoxamine 5'-phosphate: step 1/1. It functions in the pathway cofactor metabolism; pyridoxal 5'-phosphate salvage; pyridoxal 5'-phosphate from pyridoxine 5'-phosphate: step 1/1. Catalyzes the oxidation of either pyridoxine 5'-phosphate (PNP) or pyridoxamine 5'-phosphate (PMP) into pyridoxal 5'-phosphate (PLP). The protein is Pyridoxine/pyridoxamine 5'-phosphate oxidase 2 of Hydrogenovibrio crunogenus (strain DSM 25203 / XCL-2) (Thiomicrospira crunogena).